We begin with the raw amino-acid sequence, 309 residues long: Thiamine-monophosphate kinase (309 aa).

Asp25, Thr39, Ser40, and Asp41 together coordinate Mg(2+). Asp48 contacts substrate. The Mg(2+) site is built by Asp69 and Asp117. ATP contacts are provided by residues 116-117 and Arg140; that span reads GD. Asp201 is a binding site for Mg(2+). Ser203 lines the ATP pocket. Asp204 is a Mg(2+) binding site. Positions 250 and 298 each coordinate substrate.

The protein belongs to the thiamine-monophosphate kinase family.

It carries out the reaction thiamine phosphate + ATP = thiamine diphosphate + ADP. The protein operates within cofactor biosynthesis; thiamine diphosphate biosynthesis; thiamine diphosphate from thiamine phosphate: step 1/1. Its function is as follows. Catalyzes the ATP-dependent phosphorylation of thiamine-monophosphate (TMP) to form thiamine-pyrophosphate (TPP), the active form of vitamin B1. This chain is Thiamine-monophosphate kinase, found in Pyrococcus horikoshii (strain ATCC 700860 / DSM 12428 / JCM 9974 / NBRC 100139 / OT-3).